A 214-amino-acid chain; its full sequence is tRNA (guanine-N(7)-)-methyltransferase (214 aa).

Positions 44, 69, 96, and 118 each coordinate S-adenosyl-L-methionine. Asp118 is an active-site residue. Residue Lys122 coordinates substrate. Residues 124–129 (RHEKRR) are interaction with RNA. Residues Asp154 and 192 to 195 (TEYE) contribute to the substrate site.

The protein belongs to the class I-like SAM-binding methyltransferase superfamily. TrmB family.

It carries out the reaction guanosine(46) in tRNA + S-adenosyl-L-methionine = N(7)-methylguanosine(46) in tRNA + S-adenosyl-L-homocysteine. Its pathway is tRNA modification; N(7)-methylguanine-tRNA biosynthesis. Its function is as follows. Catalyzes the formation of N(7)-methylguanine at position 46 (m7G46) in tRNA. The protein is tRNA (guanine-N(7)-)-methyltransferase of Lacticaseibacillus casei (strain BL23) (Lactobacillus casei).